A 194-amino-acid chain; its full sequence is RNA pyrophosphohydrolase (194 aa).

Residues 6 to 149 (GFRPNVGIIL…KRDVYQRALQ (144 aa)) enclose the Nudix hydrolase domain. A Nudix box motif is present at residues 38–59 (GGIKFGETPEQAMYRELEEEVG). Residues 158–194 (PTQHVPPQHNTARYLRQTHASRKPDEPSTEKTKPDNE) are disordered. Positions 179–194 (RKPDEPSTEKTKPDNE) are enriched in basic and acidic residues.

It belongs to the Nudix hydrolase family. RppH subfamily. It depends on a divalent metal cation as a cofactor.

Accelerates the degradation of transcripts by removing pyrophosphate from the 5'-end of triphosphorylated RNA, leading to a more labile monophosphorylated state that can stimulate subsequent ribonuclease cleavage. The protein is RNA pyrophosphohydrolase of Janthinobacterium sp. (strain Marseille) (Minibacterium massiliensis).